A 301-amino-acid chain; its full sequence is UDP-N-acetylenolpyruvoylglucosamine reductase (301 aa).

An FAD-binding PCMH-type domain is found at 26 to 193; the sequence is KTGGPAQYLA…VSATFGLEPG (168 aa). Residue Arg172 is part of the active site. Catalysis depends on Ser222, which acts as the Proton donor. Residue Glu292 is part of the active site.

It belongs to the MurB family. The cofactor is FAD.

The protein resides in the cytoplasm. It carries out the reaction UDP-N-acetyl-alpha-D-muramate + NADP(+) = UDP-N-acetyl-3-O-(1-carboxyvinyl)-alpha-D-glucosamine + NADPH + H(+). It participates in cell wall biogenesis; peptidoglycan biosynthesis. Cell wall formation. This is UDP-N-acetylenolpyruvoylglucosamine reductase from Lactobacillus johnsonii (strain CNCM I-12250 / La1 / NCC 533).